Reading from the N-terminus, the 944-residue chain is Respiratory burst oxidase homolog protein F (944 aa).

Residues 2–387 lie on the Cytoplasmic side of the membrane; sequence KPFSKNDRRR…VYIMQENWKR (386 aa). 2 coiled-coil regions span residues 102–126 and 157–184; these read QFSQELKAEAVAKAKQLSQELKRFS and LEARALRKQRAQLDRTRSSAQRALRGLR. EF-hand-like stretches follow at residues 207 to 215 and 241 to 252; these read EKNGYIYRS and RRLKVEKINHDE. EF-hand domains are found at residues 264–299 and 308–343; these read SFDSRLQIFFDIVDKNEDGRITEEEVKEIIMLSASA and QAEEYAALIMEELDPERLGYIELWQLETLLLQKDTY. The Ca(2+) site is built by aspartate 277, asparagine 279, aspartate 281, arginine 283, glutamate 288, aspartate 321, and tyrosine 327. 2 positions are modified to phosphoserine: serine 354 and serine 358. A helical membrane pass occupies residues 388–408; sequence IWVLSLWIMIMIGLFLWKFFQ. The Extracellular segment spans residues 409 to 475; that stretch reads YKQKDAFHVM…INFHKTIAGA (67 aa). The Ferric oxidoreductase domain maps to 426-583; sequence KGAAETLKFN…LFVIVYILLI (158 aa). Residues 476–492 traverse the membrane as a helical segment; it reads IVVAVILHIGDHLACDF. Residues 493-527 are Cytoplasmic-facing; it reads PRIVRATEYDYNRYLFHYFQTKQPTYFDLVKGPEG. Residues 528–548 traverse the membrane as a helical segment; that stretch reads ITGILMVILMIISFTLATRWF. Topologically, residues 549–570 are extracellular; that stretch reads RRNLVKLPKPFDRLTGFNAFWY. Residues 571 to 591 form a helical membrane-spanning segment; the sequence is SHHLFVIVYILLILHGIFLYF. Over 592–599 the chain is Cytoplasmic; it reads AKPWYVRT. A helical membrane pass occupies residues 600–617; sequence TWMYLAVPVLLYGGERTL. Residues 618–744 lie on the Extracellular side of the membrane; that stretch reads RYFRSGSYSV…PYGAPAQDYR (127 aa). Residues 622–742 form the FAD-binding FR-type domain; sequence SGSYSVRLLK…DGPYGAPAQD (121 aa). The chain crosses the membrane as a helical span at residues 745–765; it reads KYDVLLLVGLGIGATPFISIL. Over 766 to 944 the chain is Cytoplasmic; that stretch reads KDLLNNIVKM…TKFEFHKEHF (179 aa).

Belongs to the RBOH (TC 5.B.1.3) family. In terms of assembly, monomer and homodimer. Interacts (via N-terminus) with CIPK26. Interacts (via N-terminus) with SRC2. Post-translationally, not glycosylated. Phosphorylated by CIPK26. As to expression, expressed in roots, stems, seedlings, inflorescences, leaves and guard cells.

The protein localises to the cell membrane. Inhibited by diphenylene iodonium (DPI). In terms of biological role, calcium-dependent NADPH oxidase that generates superoxide. Generates reactive oxygen species (ROS) during incompatible interactions with pathogens and is important in the regulation of the hypersensitive response (HR). Involved in abscisic acid-induced stomatal closing and in UV-B and abscisic acid ROS-dependent signaling. This is Respiratory burst oxidase homolog protein F (RBOHF) from Arabidopsis thaliana (Mouse-ear cress).